The primary structure comprises 192 residues: dTTP/UTP pyrophosphatase (192 aa).

Asp70 serves as the catalytic Proton acceptor.

Belongs to the Maf family. YhdE subfamily. Requires a divalent metal cation as cofactor.

The protein localises to the cytoplasm. It catalyses the reaction dTTP + H2O = dTMP + diphosphate + H(+). It carries out the reaction UTP + H2O = UMP + diphosphate + H(+). Its function is as follows. Nucleoside triphosphate pyrophosphatase that hydrolyzes dTTP and UTP. May have a dual role in cell division arrest and in preventing the incorporation of modified nucleotides into cellular nucleic acids. The polypeptide is dTTP/UTP pyrophosphatase (Alkaliphilus oremlandii (strain OhILAs) (Clostridium oremlandii (strain OhILAs))).